Consider the following 397-residue polypeptide: Nuclear RNA export factor 5 (397 aa).

The RRM domain occupies 13 to 92; sequence WFKVTIPYGI…IFVSHFTAPY (80 aa). 4 LRR repeats span residues 160-185, 186-209, 210-237, and 238-265; these read ELLS…EKAP, KVKT…VKGL, KLEE…AIRD, and CFPK…ETMK. The NTF2; truncated domain maps to 280 to 367; it reads LVLQFLQQSN…ESQRWWCLLS (88 aa).

Belongs to the NXF family. In terms of assembly, interacts with NXT1 and NXT2.

The protein resides in the cytoplasm. The protein localises to the nucleus. Could be involved in the export of mRNA from the nucleus to the cytoplasm. Could also have a role in polarized cytoplasmic transport and localization of mRNA in neurons. The protein is Nuclear RNA export factor 5 (NXF5) of Homo sapiens (Human).